A 218-amino-acid polypeptide reads, in one-letter code: Riboflavin synthase (218 aa).

2 Lumazine-binding repeats span residues 1-97 (MFTG…FGGH) and 98-194 (IVSG…ERLL). 2,4-dihydroxypteridine-binding positions include 4–6 (GII), 48–50 (CLT), 62–67 (DLSIET), 101–103 (GHV), lysine 136, 145–147 (SLT), and 159–164 (TIVPHT).

As to quaternary structure, homotrimer.

The enzyme catalyses 2 6,7-dimethyl-8-(1-D-ribityl)lumazine + H(+) = 5-amino-6-(D-ribitylamino)uracil + riboflavin. Its pathway is cofactor biosynthesis; riboflavin biosynthesis; riboflavin from 2-hydroxy-3-oxobutyl phosphate and 5-amino-6-(D-ribitylamino)uracil: step 2/2. Its function is as follows. Catalyzes the dismutation of two molecules of 6,7-dimethyl-8-ribityllumazine, resulting in the formation of riboflavin and 5-amino-6-(D-ribitylamino)uracil. This chain is Riboflavin synthase, found in Photobacterium phosphoreum.